A 210-amino-acid polypeptide reads, in one-letter code: Orotate phosphoribosyltransferase (210 aa).

Residues R94, K98, H100, and 120–128 each bind 5-phospho-alpha-D-ribose 1-diphosphate; that span reads EDLISTGGS. S124 contacts orotate.

Belongs to the purine/pyrimidine phosphoribosyltransferase family. PyrE subfamily. As to quaternary structure, homodimer. Requires Mg(2+) as cofactor.

The enzyme catalyses orotidine 5'-phosphate + diphosphate = orotate + 5-phospho-alpha-D-ribose 1-diphosphate. The protein operates within pyrimidine metabolism; UMP biosynthesis via de novo pathway; UMP from orotate: step 1/2. In terms of biological role, catalyzes the transfer of a ribosyl phosphate group from 5-phosphoribose 1-diphosphate to orotate, leading to the formation of orotidine monophosphate (OMP). This chain is Orotate phosphoribosyltransferase, found in Bacillus cereus (strain ATCC 14579 / DSM 31 / CCUG 7414 / JCM 2152 / NBRC 15305 / NCIMB 9373 / NCTC 2599 / NRRL B-3711).